Reading from the N-terminus, the 652-residue chain is WD repeat-containing protein 70 (652 aa).

Disordered stretches follow at residues 1–22 (MERP…LAVT) and 45–171 (RRTA…IPDS). The segment covering 45–76 (RRTAVERSRKTLEAREREEEMNREKELRRQNE) has biased composition (basic and acidic residues). Over residues 92 to 102 (SKSSSRDTSSS) the composition is skewed to low complexity. 2 stretches are compositionally biased toward acidic residues: residues 103-115 (ESDE…DDEL) and 146-162 (EDVE…EEEE). WD repeat units follow at residues 178–217 (HGTK…ASFK), 225–266 (CECH…ECIK), 279–319 (GHTA…KQKS), 328–367 (GKKV…HPKF), 374–413 (DPGT…KPLF), 419–464 (PTMF…RVYE), and 467–506 (ITDA…QRGA). Lys-294 is covalently cross-linked (Glycyl lysine isopeptide (Lys-Gly) (interchain with G-Cter in SUMO2)). N6-acetyllysine is present on Lys-450. The span at 538–563 (REPRQRSTRKQLEKDRLDPLKSHKPE) shows a compositional bias: basic and acidic residues. The interval 538–577 (REPRQRSTRKQLEKDRLDPLKSHKPEPPVAGPGRGGRVGT) is disordered. Position 577 is a phosphothreonine (Thr-577). Glycyl lysine isopeptide (Lys-Gly) (interchain with G-Cter in SUMO2) cross-links involve residues Lys-588 and Lys-594. Ser-619 and Ser-636 each carry phosphoserine. The interval 629–652 (TMFAQVESDDEETKNEPEWKKRKI) is disordered. Residues 642–652 (KNEPEWKKRKI) are compositionally biased toward basic and acidic residues.

The protein belongs to the WD repeat GAD-1 family.

This Bos taurus (Bovine) protein is WD repeat-containing protein 70 (WDR70).